The sequence spans 549 residues: MAAKDVKFSRDARERMLRGVNILADAVKVTLGPKGRNVVIDKSFGAPRITKDGVTVAKEIELEDKFENMGAQMVREVASKTNDIAGDGTTTATVLAQSIVQEGHKAVAAGMNPMDLKRGIDLAVADVVATLIKNAKKIKTSEEVAQVGTIAGNGDSSVGSMIAEAMQKVGNEGVITVEEAKTAETELEVVEGMQFDRGYLSPYFVTNADKMVADLEDAYILLHEKKLSNLQAMLPILEAVVQTSKPLVIISEDVEGEALATLVVNKLRGGLKIAAVKAPGFGDRRKAMLEDIAILTGGQVISEDLGIKLENVGLNMLGRAKKVSISKENTTIVDGAGKKAEIQGRVAQIKQQIEETTSDYDKEKLQERLAKLAGGVAVIRVGGATEVEVKEKKDRVDDALNATRAAVEEGIVPGGGVALLRASLSINAVGANSDQTAGISIVRRALQAPARQIAANAGAEASIVAGKILENKGATYGYNAQTGEYGDMIAMGIVDPVKVVRTALQDAASVAGLLVTAEAMIAEAPKKESAGGGMPGGMPGGGMGGMGGF.

ATP-binding positions include 30 to 33, Lys-51, 87 to 91, Gly-415, and Asp-495; these read TLGP and DGTTT.

This sequence belongs to the chaperonin (HSP60) family. Forms a cylinder of 14 subunits composed of two heptameric rings stacked back-to-back. Interacts with the co-chaperonin GroES.

The protein localises to the cytoplasm. The catalysed reaction is ATP + H2O + a folded polypeptide = ADP + phosphate + an unfolded polypeptide.. Together with its co-chaperonin GroES, plays an essential role in assisting protein folding. The GroEL-GroES system forms a nano-cage that allows encapsulation of the non-native substrate proteins and provides a physical environment optimized to promote and accelerate protein folding. The chain is Chaperonin GroEL 5 from Mesorhizobium japonicum (strain LMG 29417 / CECT 9101 / MAFF 303099) (Mesorhizobium loti (strain MAFF 303099)).